We begin with the raw amino-acid sequence, 452 residues long: Glutamate--tRNA ligase 2 (452 aa).

Residues 8-18 (PSPTGRLHVGN) carry the 'HIGH' region motif. The 'KMSKS' region signature appears at 246-250 (KLSKR). Position 249 (lysine 249) interacts with ATP.

It belongs to the class-I aminoacyl-tRNA synthetase family. Glutamate--tRNA ligase type 1 subfamily. Monomer.

It is found in the cytoplasm. The catalysed reaction is tRNA(Glu) + L-glutamate + ATP = L-glutamyl-tRNA(Glu) + AMP + diphosphate. Its function is as follows. Catalyzes the attachment of glutamate to tRNA(Glu) in a two-step reaction: glutamate is first activated by ATP to form Glu-AMP and then transferred to the acceptor end of tRNA(Glu). The chain is Glutamate--tRNA ligase 2 from Erythrobacter litoralis (strain HTCC2594).